A 282-amino-acid polypeptide reads, in one-letter code: ABC transporter I family member 21 (282 aa).

Positions isoleucine 13 to valine 248 constitute an ABC transporter domain. ATP is bound at residue glycine 46–threonine 53.

Belongs to the ABC transporter superfamily. ABCI family. In terms of tissue distribution, expressed in root elongating zone and root meristem, as well as in elongating etiolated hypocotyls.

It is found in the cytoplasm. In Arabidopsis thaliana (Mouse-ear cress), this protein is ABC transporter I family member 21 (ABCI21).